The primary structure comprises 500 residues: Glycerol kinase (500 aa).

Thr-13 provides a ligand contact to ADP. 3 residues coordinate ATP: Thr-13, Thr-14, and Ser-15. Residue Thr-13 participates in sn-glycerol 3-phosphate binding. Arg-17 is a binding site for ADP. Sn-glycerol 3-phosphate-binding residues include Arg-83, Glu-84, Tyr-135, and Asp-244. Glycerol contacts are provided by Arg-83, Glu-84, Tyr-135, Asp-244, and Gln-245. ADP contacts are provided by Thr-266 and Gly-309. 4 residues coordinate ATP: Thr-266, Gly-309, Gln-313, and Gly-410. Gly-410 and Asn-414 together coordinate ADP.

It belongs to the FGGY kinase family.

The catalysed reaction is glycerol + ATP = sn-glycerol 3-phosphate + ADP + H(+). Its pathway is polyol metabolism; glycerol degradation via glycerol kinase pathway; sn-glycerol 3-phosphate from glycerol: step 1/1. Its activity is regulated as follows. Inhibited by fructose 1,6-bisphosphate (FBP). Its function is as follows. Key enzyme in the regulation of glycerol uptake and metabolism. Catalyzes the phosphorylation of glycerol to yield sn-glycerol 3-phosphate. This Burkholderia multivorans (strain ATCC 17616 / 249) protein is Glycerol kinase.